The primary structure comprises 607 residues: Ceramide kinase (607 aa).

Residues 135–358 (DRPKSLMVFV…LDIAQVVRWK (224 aa)) enclose the DAGKc domain. Residues 145–149 (HPLCG), threonine 176, and 205–211 (GDGLFNE) contribute to the ATP site. 204-207 (GGDG) lines the substrate pocket. The active-site Proton donor/acceptor is aspartate 206. Residues 247 to 297 (NDLSNSELTGDDANAISGSSNTPDDHEPLLSTTRSTGLDISSSDSSDEPCN) are disordered. Residues 276 to 286 (LSTTRSTGLDI) are compositionally biased toward polar residues. Position 320 (serine 320) interacts with ATP. Residues 454-461 (CRTNCLIC) carry the CXXXCXXC motif.

It depends on Ca(2+) as a cofactor. The cofactor is Mg(2+). In terms of tissue distribution, highly expressed in leaves and at lower levels in stems.

The enzyme catalyses an N-acylsphing-4-enine + ATP = an N-acylsphing-4-enine 1-phosphate + ADP + H(+). Its function is as follows. Catalyzes specifically the phosphorylation of ceramide to form ceramide 1-phosphate. Possesses activity on ceramide analog (C6 synthetic ceramide) in vitro. Ceramide is a critical sphingolipid metabolite that induces programmed cell death (PCD) in plants and ceramide-1-phosphate has a PCD suppressive effect. Thus, ceramide phosphorylation plays a role in the modulation of PCD and CERK activity is crucial for the maintenance of cell viability. This is Ceramide kinase (CERK) from Oryza sativa subsp. japonica (Rice).